The primary structure comprises 403 residues: S-adenosylmethionine:tRNA ribosyltransferase-isomerase (403 aa).

It belongs to the QueA family. In terms of assembly, monomer.

It localises to the cytoplasm. The catalysed reaction is 7-aminomethyl-7-carbaguanosine(34) in tRNA + S-adenosyl-L-methionine = epoxyqueuosine(34) in tRNA + adenine + L-methionine + 2 H(+). The protein operates within tRNA modification; tRNA-queuosine biosynthesis. Functionally, transfers and isomerizes the ribose moiety from AdoMet to the 7-aminomethyl group of 7-deazaguanine (preQ1-tRNA) to give epoxyqueuosine (oQ-tRNA). In Psychrobacter arcticus (strain DSM 17307 / VKM B-2377 / 273-4), this protein is S-adenosylmethionine:tRNA ribosyltransferase-isomerase.